We begin with the raw amino-acid sequence, 490 residues long: Xylulose kinase (490 aa).

4 residues coordinate substrate: His99, Arg170, Asp280, and Asn281. Residues Trp355, 441–442 (GA), and Asn445 each bind ATP.

The protein belongs to the FGGY kinase family. In terms of assembly, monomer.

The catalysed reaction is D-xylulose + ATP = D-xylulose 5-phosphate + ADP + H(+). Functionally, phosphorylates D-xylulose to produce D-xylulose 5-phosphate, a molecule that may play an important role in the regulation of glucose metabolism and lipogenesis. In Bos taurus (Bovine), this protein is Xylulose kinase (XYLB).